The following is a 194-amino-acid chain: Probable DNA-directed RNA polymerase subunit delta (194 aa).

The 70-residue stretch at 14–83 folds into the HTH HARE-type domain; the sequence is LSMIEVARAI…GENKWGLRSW (70 aa). Residues 117-194 are disordered; that stretch reads GDEDAIDYSD…SDDEEDEEGE (78 aa).

This sequence belongs to the RpoE family. As to quaternary structure, RNAP is composed of a core of 2 alpha, a beta and a beta' subunits. The core is associated with a delta subunit and one of several sigma factors.

In terms of biological role, participates in both the initiation and recycling phases of transcription. In the presence of the delta subunit, RNAP displays an increased specificity of transcription, a decreased affinity for nucleic acids, and an increased efficiency of RNA synthesis because of enhanced recycling. This is Probable DNA-directed RNA polymerase subunit delta from Streptococcus mutans serotype c (strain ATCC 700610 / UA159).